A 148-amino-acid chain; its full sequence is Ubiquitin-conjugating enzyme E2 8 (148 aa).

The region spanning methionine 1–methionine 147 is the UBC core domain. Catalysis depends on cysteine 85, which acts as the Glycyl thioester intermediate.

The protein belongs to the ubiquitin-conjugating enzyme family. Interacts with CIP8, CHIP, NLA and XERICO. In terms of tissue distribution, highest expression in young stems, old leaves. Lowest levels in floral buds, anthers and young leaves.

It catalyses the reaction S-ubiquitinyl-[E1 ubiquitin-activating enzyme]-L-cysteine + [E2 ubiquitin-conjugating enzyme]-L-cysteine = [E1 ubiquitin-activating enzyme]-L-cysteine + S-ubiquitinyl-[E2 ubiquitin-conjugating enzyme]-L-cysteine.. Its pathway is protein modification; protein ubiquitination. Accepts the ubiquitin from the E1 complex and catalyzes its covalent attachment to other proteins. Mediates the selective degradation of short-lived and abnormal proteins. This is Ubiquitin-conjugating enzyme E2 8 (UBC8) from Arabidopsis thaliana (Mouse-ear cress).